We begin with the raw amino-acid sequence, 216 residues long: ATP phosphoribosyltransferase (216 aa).

It belongs to the ATP phosphoribosyltransferase family. Short subfamily. In terms of assembly, heteromultimer composed of HisG and HisZ subunits.

It localises to the cytoplasm. The enzyme catalyses 1-(5-phospho-beta-D-ribosyl)-ATP + diphosphate = 5-phospho-alpha-D-ribose 1-diphosphate + ATP. It participates in amino-acid biosynthesis; L-histidine biosynthesis; L-histidine from 5-phospho-alpha-D-ribose 1-diphosphate: step 1/9. Its function is as follows. Catalyzes the condensation of ATP and 5-phosphoribose 1-diphosphate to form N'-(5'-phosphoribosyl)-ATP (PR-ATP). Has a crucial role in the pathway because the rate of histidine biosynthesis seems to be controlled primarily by regulation of HisG enzymatic activity. The sequence is that of ATP phosphoribosyltransferase from Rubrobacter xylanophilus (strain DSM 9941 / JCM 11954 / NBRC 16129 / PRD-1).